The following is an 88-amino-acid chain: Small ribosomal subunit protein bS20 (88 aa).

It belongs to the bacterial ribosomal protein bS20 family.

Binds directly to 16S ribosomal RNA. The chain is Small ribosomal subunit protein bS20 from Micrococcus luteus (strain ATCC 4698 / DSM 20030 / JCM 1464 / CCM 169 / CCUG 5858 / IAM 1056 / NBRC 3333 / NCIMB 9278 / NCTC 2665 / VKM Ac-2230) (Micrococcus lysodeikticus).